A 98-amino-acid chain; its full sequence is Large ribosomal subunit protein eL14 (98 aa).

Belongs to the eukaryotic ribosomal protein eL14 family.

The protein is Large ribosomal subunit protein eL14 of Thermofilum pendens (strain DSM 2475 / Hrk 5).